Consider the following 444-residue polypeptide: Trigger factor (444 aa).

Residues 163 to 248 (GDFLTVDFVG…AKALKKAVAP (86 aa)) enclose the PPIase FKBP-type domain.

This sequence belongs to the FKBP-type PPIase family. Tig subfamily.

It is found in the cytoplasm. It carries out the reaction [protein]-peptidylproline (omega=180) = [protein]-peptidylproline (omega=0). Its function is as follows. Involved in protein export. Acts as a chaperone by maintaining the newly synthesized protein in an open conformation. Functions as a peptidyl-prolyl cis-trans isomerase. The chain is Trigger factor from Granulibacter bethesdensis (strain ATCC BAA-1260 / CGDNIH1).